A 239-amino-acid chain; its full sequence is MDGFSILHEPPAAYKEVKWMADTFVAGMGLGWIVNYALMIRFSWKGRPHCMALLPLCNNIAWELTYTIVYPSANRVELLVFAIGLTLNFFIMVGARRSARVEWRHSPLLSEHAGFILLVGTLLCFTGHVALAMEIGPGLAYSWGAVVCQLALSIGGLFQLLQRNSTAGTSWTLWSSRFLGSCCTVAFAGLRCKYWPEVFGWLASPLVLWSLVTFLLADSAYGFCLYRVSHAETKARKKH.

5 consecutive transmembrane segments (helical) span residues 20–40 (MADTFVAGMGLGWIVNYALMI), 50–70 (CMALLPLCNNIAWELTYTIVY), 75–95 (RVELLVFAIGLTLNFFIMVGA), 113–133 (AGFILLVGTLLCFTGHVALAM), and 138–158 (GLAYSWGAVVCQLALSIGGLF). The N-linked (GlcNAc...) asparagine glycan is linked to Asn164. Residues 197 to 217 (EVFGWLASPLVLWSLVTFLLA) traverse the membrane as a helical segment.

This sequence belongs to the paxB family.

It localises to the membrane. It participates in secondary metabolite biosynthesis. Its function is as follows. Terpene cyclase; part of the gene cluster that mediates the biosynthesis of paspalitrems, indole-diterpene (IDT) mycotoxins that are potent tremorgens in mammals. The geranylgeranyl diphosphate (GGPP) synthase idtG is proposed to catalyze the first step in IDT biosynthesis via catalysis of a series of iterative condensations of isopentenyl diphosphate (IPP) with dimethylallyl diphosphate (DMAPP), geranyl diphosphate (GPP), and farnesyl diphosphate (FPP), to form GGPP. Condensation of indole-3-glycerol phosphate with GGPP by the prenyltransferase idtC then forms 3-geranylgeranylindole (3-GGI). Epoxidation of the two terminal alkenes of the geranylgeranyl moiety by the FAD-dependent monooxygenase idtM, and cyclization by the terpene cyclase idtB then leads to the production of paspaline. The cytochrome P450 monooxygenase idtP then catalyzes oxidative elimination of the pendant methyl group at C-12 of paspaline and generates the C-10 ketone to yield 13-desoxypaxilline. The cytochrome P450 monooxygenase idtQ may catalyze the C-13 oxidation of 13-desoxypaxilline to afford paxilline. Considering that both paspalicine and paxilline were detected in C.paspali, idtQ also catalyzes the formation of paspalinine from 13-desoxypaxilline via paspalicine as an intermediate. Finally, the alpha-prenyltransferase idtF prenylates paspalinine at the C-20 or the C-21 positions to yield paspalitrems A and C, respectively. The hydroxylation of paspalitrem A at C-32 by a still unknown oxidase affords paspalitrem B. The chain is Terpene cyclase idtB from Claviceps paspali (Rye ergot fungus).